We begin with the raw amino-acid sequence, 401 residues long: Dynactin subunit 2 (401 aa).

The segment at 1 to 25 (MADPKYADLPGIARNEPDVYETSDL) is disordered. A2 is modified (N-acetylalanine). Y6 bears the Phosphotyrosine mark. A Phosphoserine modification is found at S83. Position 86 is a phosphotyrosine (Y86). Residues 99–132 (PQQKYQRLLHEVQELTTEVEKIKTTVKESATEEK) adopt a coiled-coil conformation. Phosphothreonine occurs at positions 134 and 198. The stretch at 214–244 (EQDKFSQAAKVAELEKRLTELETAVRCDQDA) forms a coiled coil. S320 bears the Phosphoserine mark. Positions 379–399 (RENLATVEGNFASIDERMKKL) form a coiled coil.

Belongs to the dynactin subunit 2 family. As to quaternary structure, subunit of dynactin, a multiprotein complex part of a tripartite complex with dynein and a adapter, such as BICDL1, BICD2 or HOOK3. The dynactin complex is built around ACTR1A/ACTB filament and consists of an actin-related filament composed of a shoulder domain, a pointed end and a barbed end. Its length is defined by its flexible shoulder domain. The soulder is composed of 2 DCTN1 subunits, 4 DCTN2 and 2 DCTN3. The 4 DCNT2 (via N-terminus) bind the ACTR1A filament and act as molecular rulers to determine the length. The pointed end is important for binding dynein-dynactin cargo adapters and consists of 4 subunits: ACTR10, DCNT4, DCTN5 and DCTN6. The barbed end is composed of a CAPZA1:CAPZB heterodimers, which binds ACTR1A/ACTB filament and dynactin and stabilizes dynactin. Interacts with BICD2 and CEP135. Interacts with DYNAP. Interacts with ECPAS. Interacts with MAPRE1.

It localises to the cytoplasm. The protein localises to the cytoskeleton. It is found in the microtubule organizing center. Its subcellular location is the centrosome. The protein resides in the membrane. Functionally, part of the dynactin complex that activates the molecular motor dynein for ultra-processive transport along microtubules. In the dynactin soulder domain, binds the ACTR1A filament and acts as a molecular ruler to determine the length. Modulates cytoplasmic dynein binding to an organelle, and plays a role in prometaphase chromosome alignment and spindle organization during mitosis. Involved in anchoring microtubules to centrosomes. May play a role in synapse formation during brain development. The polypeptide is Dynactin subunit 2 (Homo sapiens (Human)).